A 646-amino-acid polypeptide reads, in one-letter code: Mitochondrial distribution and morphology protein 10 (646 aa).

2 disordered regions span residues 206-230 (KSTS…SLSN) and 315-347 (ETSS…GGGL). Over residues 207–230 (STSSSMDRLDSSNPSLSSSTSLSN) the composition is skewed to low complexity. Residues 315–333 (ETSSSASYPQRNGSVLHTG) are compositionally biased toward polar residues.

The protein belongs to the MDM10 family. Component of the ER-mitochondria encounter structure (ERMES) or MDM complex, composed of MMM1, MDM10, MDM12 and MDM34. Associates with the mitochondrial outer membrane sorting assembly machinery SAM(core) complex.

It localises to the mitochondrion outer membrane. In terms of biological role, component of the ERMES/MDM complex, which serves as a molecular tether to connect the endoplasmic reticulum and mitochondria. Components of this complex are involved in the control of mitochondrial shape and protein biogenesis and may function in phospholipid exchange. MDM10 is involved in the late assembly steps of the general translocase of the mitochondrial outer membrane (TOM complex). Functions in the TOM40-specific route of the assembly of outer membrane beta-barrel proteins, including the association of TOM40 with the receptor TOM22 and small TOM proteins. Can associate with the SAM(core) complex as well as the MDM12-MMM1 complex, both involved in late steps of the major beta-barrel assembly pathway, that is responsible for biogenesis of all outer membrane beta-barrel proteins. May act as a switch that shuttles between both complexes and channels precursor proteins into the TOM40-specific pathway. Plays a role in mitochondrial morphology and in the inheritance of mitochondria. The protein is Mitochondrial distribution and morphology protein 10 of Mycosarcoma maydis (Corn smut fungus).